A 92-amino-acid chain; its full sequence is RNA-binding protein Hfq (92 aa).

Residues aspartate 9–phenylalanine 68 enclose the Sm domain.

Belongs to the Hfq family. In terms of assembly, homohexamer.

RNA chaperone that binds small regulatory RNA (sRNAs) and mRNAs to facilitate mRNA translational regulation in response to envelope stress, environmental stress and changes in metabolite concentrations. Also binds with high specificity to tRNAs. This chain is RNA-binding protein Hfq, found in Shewanella halifaxensis (strain HAW-EB4).